The sequence spans 470 residues: Putative multidrug resistance protein MdtD (470 aa).

Residues 1–11 lie on the Periplasmic side of the membrane; that stretch reads MTELPDNTRWQ. The chain crosses the membrane as a helical span at residues 12–32; sequence LWIVAFGFFMQSLDTTIVNTA. The Cytoplasmic segment spans residues 33–48; sequence LPSMAKSLGESPLHMH. The chain crosses the membrane as a helical span at residues 49 to 69; that stretch reads MVVVSYVLTVAVMLPASGWLA. Residues 70-76 are Periplasmic-facing; it reads DKIGVRN. The helical transmembrane segment at 77–97 threads the bilayer; it reads IFFAAIVLFTLGSLFCALSGT. Topologically, residues 98-101 are cytoplasmic; it reads LNQL. Residues 102–124 form a helical membrane-spanning segment; sequence VLARVLQGVGGAMMVPVGRLTVM. The Periplasmic segment spans residues 125–137; the sequence is KIVPRTQYMAAMT. The helical transmembrane segment at 138–158 threads the bilayer; the sequence is FVTLPGQIGPLLGPALGGVLV. At 159-164 the chain is on the cytoplasmic side; it reads EYASWH. The chain crosses the membrane as a helical span at residues 165 to 185; the sequence is WIFLINIPVGIVGAMATFMLM. Topologically, residues 186–196 are periplasmic; that stretch reads PNYTIETRRFD. A helical transmembrane segment spans residues 197–217; it reads LPGFLLLAIGMAVLTLALDGS. At 218-224 the chain is on the cytoplasmic side; sequence KSMGISP. The helical transmembrane segment at 225–245 threads the bilayer; sequence WTLAGLAAGGAAAILLYLFHA. Residues 246-262 are Periplasmic-facing; the sequence is KKNSGALFSLRLFRTPT. A helical membrane pass occupies residues 263–283; that stretch reads FSLGLLGSFAGRIGSGMLPFM. Residues 284–285 are Cytoplasmic-facing; it reads TP. Residues 286-306 traverse the membrane as a helical segment; the sequence is VFLQIGLGFSPFHAGLMMIPM. Residues 307-341 lie on the Periplasmic side of the membrane; that stretch reads VLGSMGMKRIVVQIVNRFGYRRVLVATTLGLALVS. Residues 342 to 362 traverse the membrane as a helical segment; sequence LLFMSVALLGWYYLLPLVLLL. At 363-395 the chain is on the cytoplasmic side; that stretch reads QGMVNSARFSSMNTLTLKDLPDTLASSGNSLLS. The chain crosses the membrane as a helical span at residues 396–416; it reads MIMQLSMSIGVTIAGMLLGMF. At 417 to 430 the chain is on the periplasmic side; sequence GQQHIGIDSSATHH. The helical transmembrane segment at 431-451 threads the bilayer; the sequence is VFMYTWLCMAVIIALPAIIFA. The Cytoplasmic portion of the chain corresponds to 452 to 470; sequence RVPNDTQQNMVISRRKRSL.

The protein belongs to the major facilitator superfamily. TCR/Tet family.

It is found in the cell inner membrane. This is Putative multidrug resistance protein MdtD from Salmonella dublin (strain CT_02021853).